We begin with the raw amino-acid sequence, 156 residues long: Flagellar assembly factor FliW (156 aa).

The protein belongs to the FliW family. As to quaternary structure, interacts with translational regulator CsrA and flagellin(s).

The protein resides in the cytoplasm. Functionally, acts as an anti-CsrA protein, binds CsrA and prevents it from repressing translation of its target genes, one of which is flagellin. Binds to flagellin and participates in the assembly of the flagellum. The chain is Flagellar assembly factor FliW from Lachnoclostridium phytofermentans (strain ATCC 700394 / DSM 18823 / ISDg) (Clostridium phytofermentans).